The sequence spans 252 residues: Expansin-A12 (252 aa).

An N-terminal signal peptide occupies residues 1–23; sequence MDMKGTYLVTVILLVSTLSVGMC. The region spanning 45 to 156 is the Expansin-like EG45 domain; it reads GGACGYDNPY…RRVGCKRRGG (112 aa). The region spanning 166–246 is the Expansin-like CBD domain; sequence NFNMVMISNV…SWWFGQTFSS (81 aa).

The protein belongs to the expansin family. Expansin A subfamily.

It is found in the secreted. The protein resides in the cell wall. The protein localises to the membrane. In terms of biological role, causes loosening and extension of plant cell walls by disrupting non-covalent bonding between cellulose microfibrils and matrix glucans. No enzymatic activity has been found. The sequence is that of Expansin-A12 (EXPA12) from Arabidopsis thaliana (Mouse-ear cress).